The sequence spans 125 residues: uncharacterized protein (125 aa).

It belongs to the HesB/IscA family.

This is an uncharacterized protein from Azospirillum brasilense.